The chain runs to 319 residues: Cell surface A33 antigen (319 aa).

A signal peptide spans 1 to 21 (MVGKMWPVLWTLCAVRVTVDA). The 113-residue stretch at 22–134 (ISVETPQDVL…LEGNTKSRVR (113 aa)) folds into the Ig-like V-type domain. Residues 22-235 (ISVETPQDVL…VAVRSPSMNV (214 aa)) are Extracellular-facing. 3 disulfide bridges follow: cysteine 43–cysteine 117, cysteine 146–cysteine 222, and cysteine 162–cysteine 211. Residues asparagine 112, asparagine 200, and asparagine 223 are each glycosylated (N-linked (GlcNAc...) asparagine). The Ig-like C2-type domain occupies 140–227 (PPSKPECGIE…GTQFCNITVA (88 aa)). A helical transmembrane segment spans residues 236-256 (ALYVGIAVGVVAALIIIGIII). Topologically, residues 257–319 (YCCCCRGKDD…GRESPDHLDQ (63 aa)) are cytoplasmic. Composition is skewed to basic and acidic residues over residues 267-295 (NTED…SRER) and 303-319 (QEEQ…HLDQ). The segment at 267 to 319 (NTEDKEDARPNREAYEEPPEQLRELSREREEEDDYRQEEQRSTGRESPDHLDQ) is disordered.

In terms of processing, N-glycosylated, contains approximately 8 kDa of N-linked carbohydrate. Palmitoylated. In terms of tissue distribution, expressed in normal gastrointestinal epithelium and in 95% of colon cancers.

The protein resides in the membrane. Functionally, may play a role in cell-cell recognition and signaling. This is Cell surface A33 antigen (GPA33) from Homo sapiens (Human).